We begin with the raw amino-acid sequence, 620 residues long: Phosphopentomutase (620 aa).

2 residues coordinate alpha-D-glucose 1,6-bisphosphate: arginine 71 and serine 173. Serine 173 acts as the Phosphoserine intermediate in catalysis. The Mg(2+) site is built by serine 173, aspartate 330, aspartate 332, and aspartate 334. Phosphoserine is present on serine 173. Alpha-D-glucose 1,6-bisphosphate contacts are provided by aspartate 334, arginine 335, threonine 408, glutamate 432, and lysine 446.

It belongs to the phosphohexose mutase family. In terms of assembly, monomer. The cofactor is Mg(2+). Highly expressed in lung, spleen and thymus. Expressed at lower levels in liver, brain, kidney, skeletal muscle, testis and heart.

The protein resides in the cytoplasm. It localises to the cytosol. The catalysed reaction is alpha-D-ribose 1-phosphate = D-ribose 5-phosphate. It catalyses the reaction 2-deoxy-alpha-D-ribose 1-phosphate = 2-deoxy-D-ribose 5-phosphate. It carries out the reaction alpha-D-glucose 1-phosphate = alpha-D-glucose 6-phosphate. The enzyme catalyses O-phospho-L-seryl-[protein] + alpha-D-glucose 1-phosphate = alpha-D-glucose 1,6-bisphosphate + L-seryl-[protein]. The catalysed reaction is alpha-D-glucose 1,6-bisphosphate + L-seryl-[protein] = O-phospho-L-seryl-[protein] + alpha-D-glucose 6-phosphate. Functionally, catalyzes the conversion of the nucleoside breakdown products ribose-1-phosphate and deoxyribose-1-phosphate to the corresponding 5-phosphopentoses. Catalyzes the reversible isomerization of alpha-D-glucose 1-phosphate to alpha-D-glucose 6-phosphate but with a lower catalytic efficiency. The mechanism proceeds via the intermediate compound alpha-D-glucose 1,6-bisphosphate. In vitro, also has a low glucose 1,6-bisphosphate synthase activity which is most probably not physiologically relevant. This chain is Phosphopentomutase, found in Mus musculus (Mouse).